A 300-amino-acid chain; its full sequence is Diphthine methyl ester synthase (300 aa).

S-adenosyl-L-methionine is bound by residues L9, D85, G88, 113 to 114, and L164; that span reads SV. A Phosphoserine modification is found at S172. Positions 222 and 247 each coordinate S-adenosyl-L-methionine. Residue S298 is modified to Phosphoserine.

This sequence belongs to the diphthine synthase family.

The protein localises to the cytoplasm. The catalysed reaction is 2-[(3S)-amino-3-carboxypropyl]-L-histidyl-[translation elongation factor 2] + 4 S-adenosyl-L-methionine = diphthine methyl ester-[translation elongation factor 2] + 4 S-adenosyl-L-homocysteine + 3 H(+). Its pathway is protein modification; peptidyl-diphthamide biosynthesis. In terms of biological role, S-adenosyl-L-methionine-dependent methyltransferase that catalyzes four methylations of the modified target histidine residue in translation elongation factor 2 (EF-2), to form an intermediate called diphthine methyl ester. The four successive methylation reactions represent the second step of diphthamide biosynthesis. This is Diphthine methyl ester synthase (DPH5) from Saccharomyces cerevisiae (strain ATCC 204508 / S288c) (Baker's yeast).